We begin with the raw amino-acid sequence, 314 residues long: 4-hydroxy-3-methylbut-2-enyl diphosphate reductase (314 aa).

Cys12 is a [4Fe-4S] cluster binding site. His43 and His81 together coordinate (2E)-4-hydroxy-3-methylbut-2-enyl diphosphate. Positions 43 and 81 each coordinate dimethylallyl diphosphate. Residues His43 and His81 each coordinate isopentenyl diphosphate. Residue Cys103 coordinates [4Fe-4S] cluster. Residue His131 participates in (2E)-4-hydroxy-3-methylbut-2-enyl diphosphate binding. Dimethylallyl diphosphate is bound at residue His131. An isopentenyl diphosphate-binding site is contributed by His131. Glu133 functions as the Proton donor in the catalytic mechanism. Thr170 is a binding site for (2E)-4-hydroxy-3-methylbut-2-enyl diphosphate. Cys198 provides a ligand contact to [4Fe-4S] cluster. Residues Ser226, Asn228, and Ser271 each coordinate (2E)-4-hydroxy-3-methylbut-2-enyl diphosphate. The dimethylallyl diphosphate site is built by Ser226, Asn228, and Ser271. Residues Ser226, Asn228, and Ser271 each coordinate isopentenyl diphosphate.

Belongs to the IspH family. [4Fe-4S] cluster is required as a cofactor.

The catalysed reaction is isopentenyl diphosphate + 2 oxidized [2Fe-2S]-[ferredoxin] + H2O = (2E)-4-hydroxy-3-methylbut-2-enyl diphosphate + 2 reduced [2Fe-2S]-[ferredoxin] + 2 H(+). It carries out the reaction dimethylallyl diphosphate + 2 oxidized [2Fe-2S]-[ferredoxin] + H2O = (2E)-4-hydroxy-3-methylbut-2-enyl diphosphate + 2 reduced [2Fe-2S]-[ferredoxin] + 2 H(+). It functions in the pathway isoprenoid biosynthesis; dimethylallyl diphosphate biosynthesis; dimethylallyl diphosphate from (2E)-4-hydroxy-3-methylbutenyl diphosphate: step 1/1. The protein operates within isoprenoid biosynthesis; isopentenyl diphosphate biosynthesis via DXP pathway; isopentenyl diphosphate from 1-deoxy-D-xylulose 5-phosphate: step 6/6. Functionally, catalyzes the conversion of 1-hydroxy-2-methyl-2-(E)-butenyl 4-diphosphate (HMBPP) into a mixture of isopentenyl diphosphate (IPP) and dimethylallyl diphosphate (DMAPP). Acts in the terminal step of the DOXP/MEP pathway for isoprenoid precursor biosynthesis. The chain is 4-hydroxy-3-methylbut-2-enyl diphosphate reductase from Halalkalibacterium halodurans (strain ATCC BAA-125 / DSM 18197 / FERM 7344 / JCM 9153 / C-125) (Bacillus halodurans).